The sequence spans 348 residues: Histidinol-phosphate aminotransferase (348 aa).

K210 is modified (N6-(pyridoxal phosphate)lysine).

It belongs to the class-II pyridoxal-phosphate-dependent aminotransferase family. Histidinol-phosphate aminotransferase subfamily. As to quaternary structure, homodimer. It depends on pyridoxal 5'-phosphate as a cofactor.

It catalyses the reaction L-histidinol phosphate + 2-oxoglutarate = 3-(imidazol-4-yl)-2-oxopropyl phosphate + L-glutamate. It functions in the pathway amino-acid biosynthesis; L-histidine biosynthesis; L-histidine from 5-phospho-alpha-D-ribose 1-diphosphate: step 7/9. The chain is Histidinol-phosphate aminotransferase from Pseudomonas putida (strain ATCC 700007 / DSM 6899 / JCM 31910 / BCRC 17059 / LMG 24140 / F1).